The following is a 415-amino-acid chain: L-threonine dehydratase biosynthetic IlvA (415 aa).

K53 is subject to N6-(pyridoxal phosphate)lysine. Pyridoxal 5'-phosphate-binding positions include N80, G183 to L187, and S308. The region spanning H332–K406 is the ACT-like domain.

Belongs to the serine/threonine dehydratase family. Homotetramer. Requires pyridoxal 5'-phosphate as cofactor.

It catalyses the reaction L-threonine = 2-oxobutanoate + NH4(+). Its pathway is amino-acid biosynthesis; L-isoleucine biosynthesis; 2-oxobutanoate from L-threonine: step 1/1. Its function is as follows. Catalyzes the anaerobic formation of alpha-ketobutyrate and ammonia from threonine in a two-step reaction. The first step involved a dehydration of threonine and a production of enamine intermediates (aminocrotonate), which tautomerizes to its imine form (iminobutyrate). Both intermediates are unstable and short-lived. The second step is the nonenzymatic hydrolysis of the enamine/imine intermediates to form 2-ketobutyrate and free ammonia. In the low water environment of the cell, the second step is accelerated by RidA. This Halalkalibacterium halodurans (strain ATCC BAA-125 / DSM 18197 / FERM 7344 / JCM 9153 / C-125) (Bacillus halodurans) protein is L-threonine dehydratase biosynthetic IlvA (ilvA).